The following is a 293-amino-acid chain: Ribosomal protein L11 methyltransferase (293 aa).

4 residues coordinate S-adenosyl-L-methionine: Thr145, Gly166, Asp188, and Asn230.

The protein belongs to the methyltransferase superfamily. PrmA family.

The protein resides in the cytoplasm. It catalyses the reaction L-lysyl-[protein] + 3 S-adenosyl-L-methionine = N(6),N(6),N(6)-trimethyl-L-lysyl-[protein] + 3 S-adenosyl-L-homocysteine + 3 H(+). In terms of biological role, methylates ribosomal protein L11. This is Ribosomal protein L11 methyltransferase from Escherichia coli O139:H28 (strain E24377A / ETEC).